We begin with the raw amino-acid sequence, 250 residues long: HTH-type transcriptional regulator SarS (250 aa).

2 DNA-binding regions (H-T-H motif) span residues 53-76 (FKKI…VLVK) and 177-200 (LKDL…NLKK).

It belongs to the SarA family.

Its subcellular location is the cytoplasm. Transcriptional regulator that controls expression of some virulence factors in a cell density-dependent manner. The protein is HTH-type transcriptional regulator SarS (sarS) of Staphylococcus aureus (strain MRSA252).